The sequence spans 506 residues: Anaerobic nitric oxide reductase transcription regulator NorR (506 aa).

Residue aspartate 57 is modified to 4-aspartylphosphate. One can recognise a Sigma-54 factor interaction domain in the interval 187–416; that stretch reads MIGLSPAMTQ…LEHAIHRAVV (230 aa). Residues 215-222 and 278-287 each bind ATP; these read GETGTGKE and ADNGTLFLDE. The segment at residues 481 to 500 is a DNA-binding region (H-T-H motif); that stretch reads WAASARALETDVANLHRLAK.

It participates in nitrogen metabolism; nitric oxide reduction. Functionally, required for the expression of anaerobic nitric oxide (NO) reductase, acts as a transcriptional activator for at least the norVW operon. Activation also requires sigma-54. In Salmonella arizonae (strain ATCC BAA-731 / CDC346-86 / RSK2980), this protein is Anaerobic nitric oxide reductase transcription regulator NorR.